Consider the following 103-residue polypeptide: Somatoliberin (103 aa).

Positions M1–S19 are cleaved as a signal peptide. Propeptides lie at residues L20–R30 and Q74–A103.

Belongs to the glucagon family.

It localises to the secreted. GRF is released by the hypothalamus and acts on the adenohypophyse to stimulate the secretion of growth hormone. This chain is Somatoliberin (Ghrh), found in Mus musculus (Mouse).